A 621-amino-acid chain; its full sequence is DnaJ homolog subfamily C member 2 (621 aa).

The residue at position 1 (methionine 1) is an N-acetylmethionine. 4 positions are modified to phosphoserine: serine 47, serine 49, serine 60, and serine 63. One can recognise a J domain in the interval 88–161; the sequence is DHYAVLGLGH…VKRRAFNSVD (74 aa). Residues 160-250 form a ZRF1-UBD region; sequence VDPTFDNSVP…RDERRWIEKQ (91 aa). Residue serine 183 is modified to Phosphoserine. Disordered stretches follow at residues 294–315 and 427–453; these read EKKA…QRQA and EEAE…GSKN. SANT domains lie at 449–511 and 549–604; these read NGSK…KLDP and TDFT…EMVK.

Component of ribosome-associated complex (RAC), a heterodimer composed of Hsp70/DnaK-type chaperone HSPA14 and Hsp40/DnaJ-type chaperone DNAJC2. Interacts (via ZRF1-UBD region) with ID1. In terms of processing, phosphorylated in M (mitotic) phase.

The protein resides in the nucleus. It localises to the cytoplasm. The protein localises to the cytosol. Functionally, acts both as a chaperone in the cytosol and as a chromatin regulator in the nucleus. When cytosolic, acts as a molecular chaperone: component of the ribosome-associated complex (RAC), a complex involved in folding or maintaining nascent polypeptides in a folding-competent state. In the RAC complex, stimulates the ATPase activity of the ribosome-associated pool of Hsp70-type chaperones HSPA14 that bind to the nascent polypeptide chain. When nuclear, mediates the switching from polycomb-repressed genes to an active state: specifically recruited at histone H2A ubiquitinated at 'Lys-119' (H2AK119ub), and promotes the displacement of the polycomb PRC1 complex from chromatin, thereby facilitating transcription activation. In Macaca fascicularis (Crab-eating macaque), this protein is DnaJ homolog subfamily C member 2 (DNAJC2).